The following is a 467-amino-acid chain: Pentatricopeptide repeat-containing protein At1g77170, mitochondrial (467 aa).

The N-terminal 30 residues, 1-30 (MFFSGLISKLHVHGTKRTNHFTIFHRLNHF), are a transit peptide targeting the mitochondrion. PPR repeat units follow at residues 81-115 (IAFL…TVLP), 116-150 (DRYS…GFVG), 151-181 (DEFC…NPER), 182-216 (KLGS…GLEP), 217-251 (DDFT…KTEE), 254-284 (DIMM…MRQR), 285-319 (NVVS…GVRP), 320-350 (NKIT…MKSE), and 356-386 (GLSH…MPMK). The segment at 391–466 (VWGCLMGGCE…IPAYSYASTT (76 aa)) is type E motif.

Belongs to the PPR family. PCMP-E subfamily.

Its subcellular location is the mitochondrion. The protein is Pentatricopeptide repeat-containing protein At1g77170, mitochondrial (PCMP-E21) of Arabidopsis thaliana (Mouse-ear cress).